Here is a 325-residue protein sequence, read N- to C-terminus: Envelope protein H3 (325 aa).

Residues 1 to 285 lie on the Virion surface side of the membrane; it reads MATVNKTPVI…FTTPLISFFG (285 aa). The chain crosses the membrane as a helical; Signal-anchor span at residues 286–306; that stretch reads LFDINVIGLIVILFIMFMLIF. Topologically, residues 307–325 are intravirion; sequence NVKSKLLWFLTGTFVTAFI.

It belongs to the orthopoxvirus OPG108 family. Does not contain disulfide bonds.

Its subcellular location is the virion membrane. Envelope protein that binds to heparan sulfate on the cell surface and might provide virion attachment to target cell. This is Envelope protein H3 (OPG108) from Variola virus (isolate Human/India/Ind3/1967) (VARV).